A 353-amino-acid chain; its full sequence is Phospho-N-acetylmuramoyl-pentapeptide-transferase (353 aa).

A run of 10 helical transmembrane segments spans residues 16-36 (YISVRAGISFFIAFVLTMYLM), 64-84 (AGTPTMGGVVFIFSTIIATVL), 88-108 (LNNFYIVGGILTLALFSLIGI), 130-150 (LIFQFLCAASIAGILFLYGHS), 160-180 (FPLFEMGVFGIVFWMFVIVGS), 198-218 (SILAFSTLSILVYVVGHAVFA), 228-248 (IAGELAIMGSAICGALIAFLW), 256-276 (VFMGDSGSLPLGAFMGYLAIV), 281-301 (ILLLAIGFIFVWETVSVILQV), and 330-350 (KIIVRFWIIAFMSNLIALLSL).

Belongs to the glycosyltransferase 4 family. MraY subfamily. Mg(2+) serves as cofactor.

The protein resides in the cell inner membrane. It catalyses the reaction UDP-N-acetyl-alpha-D-muramoyl-L-alanyl-gamma-D-glutamyl-meso-2,6-diaminopimeloyl-D-alanyl-D-alanine + di-trans,octa-cis-undecaprenyl phosphate = di-trans,octa-cis-undecaprenyl diphospho-N-acetyl-alpha-D-muramoyl-L-alanyl-D-glutamyl-meso-2,6-diaminopimeloyl-D-alanyl-D-alanine + UMP. It participates in cell wall biogenesis; peptidoglycan biosynthesis. Its function is as follows. Catalyzes the initial step of the lipid cycle reactions in the biosynthesis of the cell wall peptidoglycan: transfers peptidoglycan precursor phospho-MurNAc-pentapeptide from UDP-MurNAc-pentapeptide onto the lipid carrier undecaprenyl phosphate, yielding undecaprenyl-pyrophosphoryl-MurNAc-pentapeptide, known as lipid I. This chain is Phospho-N-acetylmuramoyl-pentapeptide-transferase, found in Aliarcobacter butzleri (strain RM4018) (Arcobacter butzleri).